A 266-amino-acid polypeptide reads, in one-letter code: Putative carbamate hydrolase RutD (266 aa).

Belongs to the AB hydrolase superfamily. Hydrolase RutD family.

The enzyme catalyses carbamate + 2 H(+) = NH4(+) + CO2. Functionally, involved in pyrimidine catabolism. May facilitate the hydrolysis of carbamate, a reaction that can also occur spontaneously. The polypeptide is Putative carbamate hydrolase RutD (Escherichia coli O157:H7).